We begin with the raw amino-acid sequence, 155 residues long: Cathelicidin-1 (155 aa).

The N-terminal stretch at 1-29 (METPRASLSLGRWSLWLLLLGLALPSASA) is a signal peptide. A Pyrrolidone carboxylic acid modification is found at Q30. Positions 30 to 143 (QALSYREAVL…KQPWAPPQAA (114 aa)) are excised as a propeptide. 3 disulfide bridges follow: C85–C96, C107–C124, and C146–C154.

Belongs to the cathelicidin family. In terms of tissue distribution, large granules of neutrophils.

The protein resides in the secreted. Functionally, potent microbicidal activity; active against S.aureus and E.coli. The protein is Cathelicidin-1 (CATHL1) of Bos taurus (Bovine).